The chain runs to 563 residues: Anaerobic glycerol-3-phosphate dehydrogenase subunit A (563 aa).

Residue 20–48 coordinates FAD; the sequence is DVIIIGGGATGAGIARDCALRGIDCILLE.

The protein belongs to the FAD-dependent glycerol-3-phosphate dehydrogenase family. Composed of a catalytic GlpA/B dimer and of membrane bound GlpC. FAD is required as a cofactor. It depends on FMN as a cofactor.

It localises to the cell inner membrane. The catalysed reaction is a quinone + sn-glycerol 3-phosphate = dihydroxyacetone phosphate + a quinol. The protein operates within polyol metabolism; glycerol degradation via glycerol kinase pathway; glycerone phosphate from sn-glycerol 3-phosphate (anaerobic route): step 1/1. The polypeptide is Anaerobic glycerol-3-phosphate dehydrogenase subunit A (glpA) (Haemophilus influenzae (strain ATCC 51907 / DSM 11121 / KW20 / Rd)).